The primary structure comprises 49 residues: U6-myrmicitoxin-Mri1a (49 aa).

Residues Met-1–Ala-27 form the signal peptide. The propeptide occupies Asn-28–Ala-35.

Contains 1 disulfide bond. In terms of tissue distribution, expressed by the venom gland.

It localises to the secreted. The chain is U6-myrmicitoxin-Mri1a from Manica rubida (European giant red ant).